Reading from the N-terminus, the 556-residue chain is uncharacterized protein (556 aa).

A helical transmembrane segment spans residues 16–36 (LFWTIGVLGAGALTTFSAVMI).

It is found in the membrane. This is an uncharacterized protein from Mycoplasma genitalium (strain ATCC 33530 / DSM 19775 / NCTC 10195 / G37) (Mycoplasmoides genitalium).